Consider the following 217-residue polypeptide: Ribosomal RNA small subunit methyltransferase G (217 aa).

Residues G79, L84, 130-131 (IE), and R145 contribute to the S-adenosyl-L-methionine site.

This sequence belongs to the methyltransferase superfamily. RNA methyltransferase RsmG family.

It localises to the cytoplasm. It catalyses the reaction guanosine(527) in 16S rRNA + S-adenosyl-L-methionine = N(7)-methylguanosine(527) in 16S rRNA + S-adenosyl-L-homocysteine. In terms of biological role, specifically methylates the N7 position of guanine in position 527 of 16S rRNA. In Hahella chejuensis (strain KCTC 2396), this protein is Ribosomal RNA small subunit methyltransferase G.